The following is a 470-amino-acid chain: 3-isopropylmalate dehydratase large subunit (470 aa).

Positions 347, 407, and 410 each coordinate [4Fe-4S] cluster.

It belongs to the aconitase/IPM isomerase family. LeuC type 1 subfamily. In terms of assembly, heterodimer of LeuC and LeuD. [4Fe-4S] cluster is required as a cofactor.

The catalysed reaction is (2R,3S)-3-isopropylmalate = (2S)-2-isopropylmalate. The protein operates within amino-acid biosynthesis; L-leucine biosynthesis; L-leucine from 3-methyl-2-oxobutanoate: step 2/4. In terms of biological role, catalyzes the isomerization between 2-isopropylmalate and 3-isopropylmalate, via the formation of 2-isopropylmaleate. The chain is 3-isopropylmalate dehydratase large subunit from Shewanella amazonensis (strain ATCC BAA-1098 / SB2B).